We begin with the raw amino-acid sequence, 245 residues long: MSPPRPRASLSPLTLLLLLGGCLLSAAGRDKGAAGREVTRASRPTVGSSGRFVSPEQHACSWQLLVPAPGTPTGGELALRCQTPGGASLHCAYRGHPERCAATGARRAHYWRRLLGALRRRPRPCLDPAPLPPRLCARKTAGSDLHSPAHPSLPARPSEPPRSRARSPARSRQSVRSPSSQPEKKPLLVKSNSGGRKAGSDPVPEPPAAAGFQPNGLDQNAELTETYCTEKWHSLCNFFVNFWNG.

An N-terminal signal peptide occupies residues 1-28; sequence MSPPRPRASLSPLTLLLLLGGCLLSAAG. Residues 33–52 form a disordered region; the sequence is AAGREVTRASRPTVGSSGRF. Cystine bridges form between Cys-60/Cys-81 and Cys-91/Cys-125. Positions 136–216 are disordered; the sequence is CARKTAGSDL…PAAAGFQPNG (81 aa). Over residues 170–180 the composition is skewed to low complexity; sequence RSRQSVRSPSS. Cys-228 and Cys-236 are joined by a disulfide.

This sequence belongs to the fibroblast growth factor-binding protein family. As to quaternary structure, interacts with FGF2. As to expression, in the adult, highly expressed in brain with lower levels in ovary. In the embryo, highest levels are found in the brain and spinal cord at 14 dpc and expression is almost completely restricted to the brain by 18 dpc. In the adult and postnatal brain, highly expressed in the orbitofrontal cortex where it is concentrated primarily in differentiated neurons.

It is found in the secreted. Functionally, heparin-binding protein which binds to FGF2, prevents binding of FGF2 to heparin and probably inhibits immobilization of FGF2 on extracellular matrix glycosaminoglycans, allowing its release and subsequent activation of FGFR signaling which leads to increased vascular permeability. The sequence is that of Fibroblast growth factor-binding protein 3 (Fgfbp3) from Mus musculus (Mouse).